The sequence spans 142 residues: Gonadotropin subunit beta-2 (142 aa).

Residues 1 to 23 (MLGLHVGTLISLFLCILLEPIEG) form the signal peptide. 6 disulfides stabilise this stretch: C29-C77, C43-C92, C46-C130, C54-C108, C58-C110, and C113-C120. N33 is a glycosylation site (N-linked (GlcNAc...) asparagine).

The protein belongs to the glycoprotein hormones subunit beta family. In terms of assembly, heterodimer of an alpha and a beta chain.

Its subcellular location is the secreted. Its function is as follows. Involved in gametogenesis and steroidogenesis. The sequence is that of Gonadotropin subunit beta-2 (cgbb) from Oncorhynchus tshawytscha (Chinook salmon).